Reading from the N-terminus, the 149-residue chain is Deoxyuridine 5'-triphosphate nucleotidohydrolase (149 aa).

Residues 68 to 70 (RSG), Asn81, and 85 to 87 (LID) contribute to the substrate site.

The protein belongs to the dUTPase family. Requires Mg(2+) as cofactor.

The enzyme catalyses dUTP + H2O = dUMP + diphosphate + H(+). It functions in the pathway pyrimidine metabolism; dUMP biosynthesis; dUMP from dCTP (dUTP route): step 2/2. This enzyme is involved in nucleotide metabolism: it produces dUMP, the immediate precursor of thymidine nucleotides and it decreases the intracellular concentration of dUTP so that uracil cannot be incorporated into DNA. In Laribacter hongkongensis (strain HLHK9), this protein is Deoxyuridine 5'-triphosphate nucleotidohydrolase.